The sequence spans 421 residues: Histidine--tRNA ligase (421 aa).

This sequence belongs to the class-II aminoacyl-tRNA synthetase family. In terms of assembly, homodimer.

The protein resides in the cytoplasm. The enzyme catalyses tRNA(His) + L-histidine + ATP = L-histidyl-tRNA(His) + AMP + diphosphate + H(+). The protein is Histidine--tRNA ligase of Francisella tularensis subsp. holarctica (strain OSU18).